The following is a 310-amino-acid chain: Flavin-dependent trigonelline monooxygenase, reductase component (310 aa).

FMN-binding positions include 40–43 (TANS), 57–63 (SIAKTSS), 90–91 (FA), and Arg97.

Belongs to the non-flavoprotein flavin reductase family. As to quaternary structure, homodimer. The trigonelline monooxygenase is composed of a reductase component TgnA and an oxygenase component TgnB.

The enzyme catalyses a reduced flavin + NAD(+) = an oxidized flavin + NADH + 2 H(+). The catalysed reaction is FADH2 + NAD(+) = FAD + NADH + 2 H(+). It carries out the reaction FMNH2 + NAD(+) = FMN + NADH + 2 H(+). With respect to regulation, maximal reductase activity is achieved only upon trigonelline (TG) binding to the reductase component before interaction with NADH. It seems that TgnA undergoes an allosteric transition upon trigonelline (TG) binding accounting for the positive cooperativity toward NADH oxidation. Its function is as follows. Involved in the degradation of the pyridine ring of trigonelline (TG; N-methylnicotinate) into succinate and methylamine as carbon and nitrogen sources, respectively. TgnA catalyzes the reduction of flavin (FMN or FAD) by NADH and supplies the reduced flavin to the oxygenase component TgnB. This chain is Flavin-dependent trigonelline monooxygenase, reductase component, found in Acinetobacter baylyi (strain ATCC 33305 / BD413 / ADP1).